A 339-amino-acid polypeptide reads, in one-letter code: Annexin A2 (339 aa).

An N-acetylserine modification is found at S2. Residues S2–Y24 are S100A10-binding site. Y24 carries the phosphotyrosine; by SRC modification. Residue S26 is modified to Phosphoserine; by PKC. Annexin repeat units lie at residues F33 to K104 and T105 to K176. Residue K49 is modified to N6-acetyllysine; alternate. K49 is covalently cross-linked (Glycyl lysine isopeptide (Lys-Gly) (interchain with G-Cter in SUMO1); alternate). K49 is covalently cross-linked (Glycyl lysine isopeptide (Lys-Gly) (interchain with G-Cter in SUMO2); alternate). K152 is subject to N6-acetyllysine. S184 bears the Phosphoserine mark. Annexin repeat units follow at residues E189–Q261 and N265–G336. At Y199 the chain carries Phosphotyrosine. K227 is modified (N6-acetyllysine).

This sequence belongs to the annexin family. As to quaternary structure, heterotetramer containing 2 light chains of S100A10/p11 and 2 heavy chains of ANXA2/p36. Interacts with ATP1B1. Interacts with DYSF. Interacts with COCH. Interacts (via repeat Annexin 1) with PCSK9 (via the C-terminal domain); the interaction inhibits the degradation of LDLR. Interacts with CEACAM1 (via the cytoplasmic domain); this interaction is regulated by phosphorylation of CEACAM1. Interacts with APPL2 and APPL1; targets APPL2 to endosomes and acting in parallel to RAB5A. Interacts with S100A4. May interact with UBAP2. Interacts with PLEKHG4B; this interaction is required for PLEKHG4B localization to cell-cell adhesions. In terms of assembly, (Microbial infection) Interacts with classical swine fever virus envelope glycoprotein E2. Post-translationally, ISGylated.

It is found in the secreted. Its subcellular location is the extracellular space. The protein localises to the extracellular matrix. The protein resides in the basement membrane. It localises to the melanosome. Functionally, calcium-regulated membrane-binding protein whose affinity for calcium is greatly enhanced by anionic phospholipids. It binds two calcium ions with high affinity. May be involved in heat-stress response. Inhibits PCSK9-enhanced LDLR degradation, probably reduces PCSK9 protein levels via a translational mechanism but also competes with LDLR for binding with PCSK9. Binds to endosomes damaged by phagocytosis of particulate wear debris and participates in endosomal membrane stabilization, thereby limiting NLRP3 inflammasome activation. Required for endothelial cell surface plasmin generation and may support fibrinolytic surveillance and neoangiogenesis. Its function is as follows. (Microbial infection) May serve as a receptor for classical swine fever virus (CSFV). Promotes CSFV infection. The protein is Annexin A2 (ANXA2) of Sus scrofa (Pig).